The sequence spans 680 residues: Tumor protein 63 (680 aa).

The tract at residues 1–107 is transcription activation; the sequence is MNFETSRCAT…MQDSDLSDPM (107 aa). The span at 123 to 157 shows a compositional bias: polar residues; sequence QIQNGSSSTSPYNTDHAQNSVTAPSPYAQPSSTFD. Residues 123-171 form a disordered region; sequence QIQNGSSSTSPYNTDHAQNSVTAPSPYAQPSSTFDALSPSPAIPSNTDY. A DNA-binding region spans residues 170–362; the sequence is DYPGPHSFDV…KADEDSIRKQ (193 aa). 4 residues coordinate Zn(2+): Cys-244, His-247, Cys-308, and Cys-312. Residues 351 to 360 show a composition bias toward basic and acidic residues; it reads DRKADEDSIR. 2 disordered regions span residues 351 to 393 and 435 to 472; these read DRKA…IKKR and YRQQQQQQHQHLLQKQTSIQSPSSYGNSSPPLNKMNSM. An interaction with HIPK2 region spans residues 352–388; it reads RKADEDSIRKQQVSDSTKNGDGTKRPFRQNTHGIQMT. Polar residues-rich tracts occupy residues 361–371 and 379–389; these read KQQVSDSTKNG and RQNTHGIQMTS. The oligomerization stretch occupies residues 394–443; sequence RSPDDELLYLPVRGRETYEMLLKIKESLELMQYLPQHTIETYRQQQQQQH. Residues 437-450 are compositionally biased toward low complexity; it reads QQQQQQHQHLLQKQ. A compositionally biased stretch (polar residues) spans 451-472; it reads TSIQSPSSYGNSSPPLNKMNSM. One can recognise an SAM domain in the interval 541-607; that stretch reads PPYPTDCSIV…WKGILDHRQL (67 aa). The tract at residues 610 to 680 is transactivation inhibition; sequence FSSPSHLLRT…KQQRIKEEGE (71 aa). A Glycyl lysine isopeptide (Lys-Gly) (interchain with G-Cter in SUMO) cross-link involves residue Lys-676.

It belongs to the p53 family. Binds DNA as a homotetramer. Isoform composition of the tetramer may determine transactivation activity. Isoforms Alpha and Gamma interact with HIPK2. Interacts with SSRP1, leading to stimulate coactivator activity. Isoform 1 and isoform 2 interact with WWP1. Interacts with PDS5A. Isoform 5 (via activation domain) interacts with NOC2L. The cofactor is Zn(2+). In terms of processing, may be sumoylated. Ubiquitinated. Polyubiquitination involves WWP1 and leads to proteasomal degradation of this protein. As to expression, widely expressed, notably in heart, kidney, placenta, prostate, skeletal muscle, testis and thymus, although the precise isoform varies according to tissue type. Progenitor cell layers of skin, breast, eye and prostate express high levels of DeltaN-type isoforms. Isoform 10 is predominantly expressed in skin squamous cell carcinomas, but not in normal skin tissues.

The protein resides in the nucleus. Functionally, acts as a sequence specific DNA binding transcriptional activator or repressor. The isoforms contain a varying set of transactivation and auto-regulating transactivation inhibiting domains thus showing an isoform specific activity. Isoform 2 activates RIPK4 transcription. May be required in conjunction with TP73/p73 for initiation of p53/TP53 dependent apoptosis in response to genotoxic insults and the presence of activated oncogenes. Involved in Notch signaling by probably inducing JAG1 and JAG2. Plays a role in the regulation of epithelial morphogenesis. The ratio of DeltaN-type and TA*-type isoforms may govern the maintenance of epithelial stem cell compartments and regulate the initiation of epithelial stratification from the undifferentiated embryonal ectoderm. Required for limb formation from the apical ectodermal ridge. Activates transcription of the p21 promoter. The protein is Tumor protein 63 (TP63) of Homo sapiens (Human).